Reading from the N-terminus, the 716-residue chain is Fatty acid oxidation complex subunit alpha (716 aa).

Residues 1-189 (MIYQSPTIQV…KVGAVDAVVA (189 aa)) form an enoyl-CoA hydratase/isomerase region. Position 296 (aspartate 296) interacts with substrate. Residues 311–716 (KDVKSAAVLG…AANNGSYYQA (406 aa)) are 3-hydroxyacyl-CoA dehydrogenase. NAD(+) contacts are provided by residues methionine 324, aspartate 343, 400 to 402 (VVE), lysine 407, and serine 429. The For 3-hydroxyacyl-CoA dehydrogenase activity role is filled by histidine 450. Asparagine 453 provides a ligand contact to NAD(+). Substrate contacts are provided by asparagine 500 and tyrosine 660.

In the N-terminal section; belongs to the enoyl-CoA hydratase/isomerase family. This sequence in the C-terminal section; belongs to the 3-hydroxyacyl-CoA dehydrogenase family. As to quaternary structure, heterotetramer of two alpha chains (FadB) and two beta chains (FadA).

The catalysed reaction is a (3S)-3-hydroxyacyl-CoA + NAD(+) = a 3-oxoacyl-CoA + NADH + H(+). The enzyme catalyses a (3S)-3-hydroxyacyl-CoA = a (2E)-enoyl-CoA + H2O. It catalyses the reaction a 4-saturated-(3S)-3-hydroxyacyl-CoA = a (3E)-enoyl-CoA + H2O. It carries out the reaction (3S)-3-hydroxybutanoyl-CoA = (3R)-3-hydroxybutanoyl-CoA. The catalysed reaction is a (3Z)-enoyl-CoA = a 4-saturated (2E)-enoyl-CoA. The enzyme catalyses a (3E)-enoyl-CoA = a 4-saturated (2E)-enoyl-CoA. It participates in lipid metabolism; fatty acid beta-oxidation. Involved in the aerobic and anaerobic degradation of long-chain fatty acids via beta-oxidation cycle. Catalyzes the formation of 3-oxoacyl-CoA from enoyl-CoA via L-3-hydroxyacyl-CoA. It can also use D-3-hydroxyacyl-CoA and cis-3-enoyl-CoA as substrate. The chain is Fatty acid oxidation complex subunit alpha from Shewanella sp. (strain ANA-3).